The following is a 402-amino-acid chain: Flavohemoprotein (402 aa).

One can recognise a Globin domain in the interval 1–138 (MLSPEVRALV…LADLLIGRER (138 aa)). His85 lines the heme b pocket. Catalysis depends on charge relay system residues Tyr95 and Glu137. Positions 149 to 402 (GGWTGWRAFK…AEVFGTGGVA (254 aa)) are reductase. The 110-residue stretch at 152–261 (TGWRAFKVVR…SPPQGDFTLD (110 aa)) folds into the FAD-binding FR-type domain. FAD is bound by residues Tyr190 and 206–209 (RQYS). 274–279 (GVGLTP) serves as a coordination point for NADP(+). Position 395 to 398 (395 to 398 (VFGT)) interacts with FAD.

It belongs to the globin family. Two-domain flavohemoproteins subfamily. The protein in the C-terminal section; belongs to the flavoprotein pyridine nucleotide cytochrome reductase family. Heme b is required as a cofactor. Requires FAD as cofactor.

It catalyses the reaction 2 nitric oxide + NADPH + 2 O2 = 2 nitrate + NADP(+) + H(+). The enzyme catalyses 2 nitric oxide + NADH + 2 O2 = 2 nitrate + NAD(+) + H(+). Its function is as follows. Is involved in NO detoxification in an aerobic process, termed nitric oxide dioxygenase (NOD) reaction that utilizes O(2) and NAD(P)H to convert NO to nitrate, which protects the bacterium from various noxious nitrogen compounds. Therefore, plays a central role in the inducible response to nitrosative stress. The polypeptide is Flavohemoprotein (Bordetella bronchiseptica (strain ATCC BAA-588 / NCTC 13252 / RB50) (Alcaligenes bronchisepticus)).